The sequence spans 1234 residues: DNA-directed RNA polymerase subunit beta (1234 aa).

It belongs to the RNA polymerase beta chain family. The RNAP catalytic core consists of 2 alpha, 1 beta, 1 beta' and 1 omega subunit. When a sigma factor is associated with the core the holoenzyme is formed, which can initiate transcription.

The enzyme catalyses RNA(n) + a ribonucleoside 5'-triphosphate = RNA(n+1) + diphosphate. In terms of biological role, DNA-dependent RNA polymerase catalyzes the transcription of DNA into RNA using the four ribonucleoside triphosphates as substrates. The sequence is that of DNA-directed RNA polymerase subunit beta from Clostridium perfringens (strain SM101 / Type A).